The chain runs to 415 residues: L-cysteine:1D-myo-inositol 2-amino-2-deoxy-alpha-D-glucopyranoside ligase (415 aa).

C43 is a binding site for Zn(2+). Residues 43 to 46 (CGIT), T58, and 81 to 83 (NVT) each bind L-cysteinyl-5'-AMP. The 'HIGH' region motif lies at 45–55 (ITPYDATHLGH). Positions 188-193 (ERGGDP) match the 'ERGGDP' region motif. W229 contributes to the L-cysteinyl-5'-AMP binding site. C233 provides a ligand contact to Zn(2+). L-cysteinyl-5'-AMP is bound at residue 251-253 (GSD). Residue H258 participates in Zn(2+) binding. V285 serves as a coordination point for L-cysteinyl-5'-AMP. Residues 291–295 (KMSKS) carry the 'KMSKS' region motif.

The protein belongs to the class-I aminoacyl-tRNA synthetase family. MshC subfamily. Monomer. The cofactor is Zn(2+).

The catalysed reaction is 1D-myo-inositol 2-amino-2-deoxy-alpha-D-glucopyranoside + L-cysteine + ATP = 1D-myo-inositol 2-(L-cysteinylamino)-2-deoxy-alpha-D-glucopyranoside + AMP + diphosphate + H(+). Functionally, catalyzes the ATP-dependent condensation of GlcN-Ins and L-cysteine to form L-Cys-GlcN-Ins. This is L-cysteine:1D-myo-inositol 2-amino-2-deoxy-alpha-D-glucopyranoside ligase from Cellulomonas flavigena (strain ATCC 482 / DSM 20109 / BCRC 11376 / JCM 18109 / NBRC 3775 / NCIMB 8073 / NRS 134).